The chain runs to 481 residues: RAC-beta serine/threonine-protein kinase (481 aa).

Residue Met-1 is modified to N-acetylmethionine. Residues 5-108 (SVIKEGWLHK…WMRAIQMVAN (104 aa)) enclose the PH domain. Phosphoserine is present on Ser-34. A disulfide bridge links Cys-60 with Cys-77. The residue at position 126 (Ser-126) is a Phosphoserine. Residues Ser-128 and Ser-131 are each glycosylated (O-linked (GlcNAc) serine). The 258-residue stretch at 152 to 409 (FDYLKLLGKG…AKEVMEHRFF (258 aa)) folds into the Protein kinase domain. ATP-binding positions include 158–166 (LGKGTFGKV) and Lys-181. The active-site Proton acceptor is the Asp-275. Residues Asn-280 and Asp-293 each contribute to the Mn(2+) site. A disulfide bond links Cys-297 and Cys-311. Residue Thr-306 is glycosylated (O-linked (GlcNAc) threonine). Position 309 is a phosphothreonine; by PDPK1 (Thr-309). A glycan (O-linked (GlcNAc) threonine) is linked at Thr-313. One can recognise an AGC-kinase C-terminal domain in the interval 410-481 (LSINWQDVVQ…QFSYSASIRE (72 aa)). Ser-447 carries the post-translational modification Phosphoserine. Residue Thr-451 is modified to Phosphothreonine. Ser-474 and Ser-478 each carry phosphoserine. The O-linked (GlcNAc) serine; alternate glycan is linked to Ser-474.

This sequence belongs to the protein kinase superfamily. AGC Ser/Thr protein kinase family. RAC subfamily. In terms of assembly, interacts with BTBD10. Interacts with KCTD20. Interacts (via PH domain) with MTCP1, TCL1A and TCL1B; this interaction may facilitate AKT2 oligomerization and phosphorylation, hence increasing kinase activity. Interacts with PHB2; this interaction may be important for myogenic differentiation. Interacts (when phosphorylated) with CLIP3/ClipR-59; this interaction promotes AKT2 recruitment to the plasma membrane. Interacts with WDFY2/ProF (via WD repeats 1-3). Post-translationally, phosphorylation on Thr-309 and Ser-474 is required for full activity. Phosphorylation of the activation loop at Thr-309 by PDPK1/PDK1 is a prerequisite for full activation. Phosphorylated and activated by PDPK1/PDK1 in the presence of phosphatidylinositol 3,4,5-trisphosphate. Phosphorylation by mTORC2 in response to growth factors plays a key role in AKT1 activation: mTORC2 phosphorylates different sites depending on the context, such as Ser-474 or Ser-478, thereby facilitating subsequent phosphorylation of the activation loop by PDPK1/PDK1. In terms of processing, ubiquitinated; undergoes both 'Lys-48'- and 'Lys-63'-linked polyubiquitination. TRAF6 catalyzes 'Lys-63'-linked AKT2 ubiquitination; this modification may be important for AKT2 recruitment to the plasma membrane and for AKT2 activating phosphorylation. When phosphorylated, undergoes 'Lys-48'-polyubiquitination catalyzed by TTC3 in the nucleus, leading to its degradation by the proteasome. O-GlcNAcylation at Thr-306 and Thr-313 inhibits activating phosphorylation at Thr-309 via the disruption of the interaction between AKT and PDPK1/PDK1. In terms of tissue distribution, widely expressed. Expressed in myoblasts.

It is found in the cytoplasm. The protein resides in the nucleus. Its subcellular location is the cell membrane. It localises to the early endosome. It carries out the reaction L-seryl-[protein] + ATP = O-phospho-L-seryl-[protein] + ADP + H(+). The catalysed reaction is L-threonyl-[protein] + ATP = O-phospho-L-threonyl-[protein] + ADP + H(+). Its activity is regulated as follows. Phosphorylation at Thr-309 (in the kinase domain) and Ser-474 (in the C-terminal regulatory region) is required for full activation. In adipocytes and hepatocytes, the activation is induced by insulin. Aminofurazans, such as 4-[2-(4-amino-2,5-dihydro-1,2,5-oxadiazol-3-yl)-6-{[(1S)-3-amino-1-phenylpropyl]oxy}-1-ethyl-1H-imidazo[4,5-c]pyridin-4-yl]-2-methylbut-3-yn-2-ol (compound 32), are potent AKT2 inhibitors. AKT2 phosphorylation of PKP1 is induced by insulin. Serine/threonine kinase closely related to AKT1 and AKT3. All 3 enzymes, AKT1, AKT2 and AKT3, are collectively known as AKT kinase. AKT regulates many processes including metabolism, proliferation, cell survival, growth and angiogenesis, through the phosphorylation of a range of downstream substrates. Over 100 substrates have been reported so far, although for most of them, the precise AKT kinase catalyzing the reaction was not specified. AKT regulates glucose uptake by mediating insulin-induced translocation of the SLC2A4/GLUT4 glucose transporter to the cell surface. Phosphorylation of PTPN1 at 'Ser-50' negatively modulates its phosphatase activity preventing dephosphorylation of the insulin receptor and the attenuation of insulin signaling. Phosphorylation of TBC1D4 triggers the binding of this effector to inhibitory 14-3-3 proteins, which is required for insulin-stimulated glucose transport. AKT also regulates the storage of glucose in the form of glycogen by phosphorylating GSK3A at 'Ser-21' and GSK3B at 'Ser-9', resulting in inhibition of its kinase activity. Phosphorylation of GSK3 isoforms by AKT is also thought to be one mechanism by which cell proliferation is driven. AKT also regulates cell survival via the phosphorylation of MAP3K5 (apoptosis signal-related kinase). Phosphorylation of 'Ser-83' decreases MAP3K5 kinase activity stimulated by oxidative stress and thereby prevents apoptosis. AKT mediates insulin-stimulated protein synthesis by phosphorylating TSC2 at 'Ser-939' and 'Thr-1462', thereby activating mTORC1 signaling and leading to both phosphorylation of 4E-BP1 and in activation of RPS6KB1. AKT is involved in the phosphorylation of members of the FOXO factors (Forkhead family of transcription factors), leading to binding of 14-3-3 proteins and cytoplasmic localization. In particular, FOXO1 is phosphorylated at 'Thr-24', 'Ser-256' and 'Ser-319'. FOXO3 and FOXO4 are phosphorylated on equivalent sites. AKT has an important role in the regulation of NF-kappa-B-dependent gene transcription and positively regulates the activity of CREB1 (cyclic AMP (cAMP)-response element binding protein). The phosphorylation of CREB1 induces the binding of accessory proteins that are necessary for the transcription of pro-survival genes such as BCL2 and MCL1. AKT phosphorylates 'Ser-454' on ATP citrate lyase (ACLY), thereby potentially regulating ACLY activity and fatty acid synthesis. Activates the 3B isoform of cyclic nucleotide phosphodiesterase (PDE3B) via phosphorylation of 'Ser-273', resulting in reduced cyclic AMP levels and inhibition of lipolysis. Phosphorylates PIKFYVE on 'Ser-318', which results in increased PI(3)P-5 activity. The Rho GTPase-activating protein DLC1 is another substrate and its phosphorylation is implicated in the regulation cell proliferation and cell growth. AKT plays a role as key modulator of the AKT-mTOR signaling pathway controlling the tempo of the process of newborn neurons integration during adult neurogenesis, including correct neuron positioning, dendritic development and synapse formation. Signals downstream of phosphatidylinositol 3-kinase (PI(3)K) to mediate the effects of various growth factors such as platelet-derived growth factor (PDGF), epidermal growth factor (EGF), insulin and insulin-like growth factor 1 (IGF1). AKT mediates the antiapoptotic effects of IGF1. Essential for the SPATA13-mediated regulation of cell migration and adhesion assembly and disassembly. May be involved in the regulation of the placental development. In response to lysophosphatidic acid stimulation, inhibits the ciliogenesis cascade. In this context, phosphorylates WDR44, hence stabilizing its interaction with Rab11 and preventing the formation of the ciliogenic Rab11-FIP3-RAB3IP complex. Also phosphorylates RAB3IP/Rabin8, thus may affect RAB3IP guanine nucleotide exchange factor (GEF) activity toward Rab8, which is important for cilia growth. Phosphorylates PKP1, facilitating its interaction with YWHAG and translocation to the nucleus, ultimately resulting in a reduction in keratinocyte intercellular adhesion. Phosphorylation of PKP1 increases PKP1 protein stability, translocation to the cytoplasm away from desmosome plaques and PKP1-driven cap-dependent translation. In terms of biological role, several AKT2-specific substrates have been identified, including ANKRD2, C2CD5, CLK2 and PITX2. May play a role in myoblast differentiation. In this context, may act through PITX2 phosphorylation. Unphosphorylated PITX2 associates with an ELAVL1/HuR-containing complex, which stabilizes CCND1 cyclin mRNA, ensuring cell proliferation. Phosphorylation by AKT2 impairs this association, leading to CCND1 mRNA destabilization and progression towards differentiation. Also involved in the negative regulation of myogenesis in response to stress conditions. In this context, acts by phosphorylating ANKRD2. May also be a key regulator of glucose uptake. Regulates insulin-stimulated glucose transport by the increase of glucose transporter GLUT4 translocation from intracellular stores to the plasma membrane. In this context, acts by phosphorylating C2CD5/CDP138 on 'Ser-197' in insulin-stimulated adipocytes. Through the phosphorylation of CLK2 on 'Thr-343', involved in insulin-regulated suppression of hepatic gluconeogenesis. This Homo sapiens (Human) protein is RAC-beta serine/threonine-protein kinase.